Here is a 214-residue protein sequence, read N- to C-terminus: Putative AgrB-like protein 2 (214 aa).

5 helical membrane-spanning segments follow: residues 41–61 (IISV…LIFL), 83–103 (TLLG…SFFA), 109–129 (LVVF…FKFA), 154–174 (ILTI…NSGW), and 179–199 (PVML…TYIG).

This sequence belongs to the AgrB family.

It is found in the cell membrane. May be involved in the proteolytic processing of a quorum sensing system signal molecule precursor. The chain is Putative AgrB-like protein 2 from Clostridium perfringens (strain 13 / Type A).